The sequence spans 217 residues: 3,4-dihydroxy-2-butanone 4-phosphate synthase (217 aa).

Residues 37–38 (RE), aspartate 42, 150–154 (RGGHT), and glutamate 174 each bind D-ribulose 5-phosphate. Glutamate 38 serves as a coordination point for Mg(2+). Histidine 153 contributes to the Mg(2+) binding site.

This sequence belongs to the DHBP synthase family. In terms of assembly, homodimer. Requires Mg(2+) as cofactor. It depends on Mn(2+) as a cofactor.

It catalyses the reaction D-ribulose 5-phosphate = (2S)-2-hydroxy-3-oxobutyl phosphate + formate + H(+). It functions in the pathway cofactor biosynthesis; riboflavin biosynthesis; 2-hydroxy-3-oxobutyl phosphate from D-ribulose 5-phosphate: step 1/1. Functionally, catalyzes the conversion of D-ribulose 5-phosphate to formate and 3,4-dihydroxy-2-butanone 4-phosphate. In Proteus mirabilis (strain HI4320), this protein is 3,4-dihydroxy-2-butanone 4-phosphate synthase.